Consider the following 374-residue polypeptide: Biotin synthase (374 aa).

Positions 51 to 278 (NTVKVNYLVN…DTEIRIAGGR (228 aa)) constitute a Radical SAM core domain. [4Fe-4S] cluster is bound by residues cysteine 66, cysteine 70, and cysteine 73. Positions 110, 143, 203, and 273 each coordinate [2Fe-2S] cluster. The segment at 346 to 374 (IAGGTSVAGSAPDPAIRRRGAGTDVPANA) is disordered.

This sequence belongs to the radical SAM superfamily. Biotin synthase family. In terms of assembly, homodimer. [4Fe-4S] cluster serves as cofactor. [2Fe-2S] cluster is required as a cofactor.

It carries out the reaction (4R,5S)-dethiobiotin + (sulfur carrier)-SH + 2 reduced [2Fe-2S]-[ferredoxin] + 2 S-adenosyl-L-methionine = (sulfur carrier)-H + biotin + 2 5'-deoxyadenosine + 2 L-methionine + 2 oxidized [2Fe-2S]-[ferredoxin]. Its pathway is cofactor biosynthesis; biotin biosynthesis; biotin from 7,8-diaminononanoate: step 2/2. In terms of biological role, catalyzes the conversion of dethiobiotin (DTB) to biotin by the insertion of a sulfur atom into dethiobiotin via a radical-based mechanism. The sequence is that of Biotin synthase from Nocardioides sp. (strain ATCC BAA-499 / JS614).